Consider the following 269-residue polypeptide: Expansin-A32 (269 aa).

Residues 1–25 (MWCTWALGRVVLAVVFLVALAAGDA) form the signal peptide. The Expansin-like EG45 domain occupies 60 to 174 (DGACGYKDTS…RRVPCVKVGG (115 aa)). Positions 184–264 (YFNLVMVSNV…DWQFGVTYQA (81 aa)) constitute an Expansin-like CBD domain.

It belongs to the expansin family. Expansin A subfamily.

It localises to the secreted. It is found in the cell wall. The protein localises to the membrane. In terms of biological role, may cause loosening and extension of plant cell walls by disrupting non-covalent bonding between cellulose microfibrils and matrix glucans. No enzymatic activity has been found. May be required for rapid internodal elongation in deepwater rice during submergence. The polypeptide is Expansin-A32 (EXPA32) (Oryza sativa subsp. japonica (Rice)).